The following is a 650-amino-acid chain: Epithelial sodium channel subunit gamma (650 aa).

Residues 1–55 (MAPGEKIKAKIKKNLPVRGPQAPTIKDLMHWYCMNTNTHGCRRIVVSRGRLRRLL) are Cytoplasmic-facing. A helical transmembrane segment spans residues 56-76 (WIAFTLTAVALIIWQCALLVF). Topologically, residues 77–542 (SFYTVSVSIK…GGQLGLWMSC (466 aa)) are extracellular. Disulfide bonds link Cys-100–Cys-284, Cys-208–Cys-215, Cys-261–Cys-268, Cys-373–Cys-458, Cys-395–Cys-454, Cys-399–Cys-450, Cys-408–Cys-435, and Cys-410–Cys-424. Positions 135–222 (RKRREAGSMP…SDCATYTFSS (88 aa)) are gating release of inhibition by proteolysis (GRIP); protease-sensitive region that is responsible for the proteolytic activation of the channel. N-linked (GlcNAc...) asparagine glycosylation occurs at Asn-210. Residue Asn-272 is glycosylated (N-linked (GlcNAc...) asparagine). N-linked (GlcNAc...) asparagine glycosylation occurs at Asn-498. The helical transmembrane segment at 543-563 (SVVCVIEIIEVFFIDFFSIIA) threads the bilayer. At 564-650 (RRQWHKAKDW…LTDTQLTNEL (87 aa)) the chain is on the cytoplasmic side. The disordered stretch occupies residues 577–628 (RQTPPSTETPSSRQGQDNPALDTDDDLPTFTSAMRLPPAPGSTVPGTPPPRY). Polar residues predominate over residues 579–593 (TPPSTETPSSRQGQD). Positions 624-628 (PPPRY) match the PY motif; mediates interaction, ubiquitination and inhibition by NEDD4 and NEDD4L motif. Residues 624–628 (PPPRY) carry the PY motif; recruits WW domain-containing proteins and is thereby required for ubiquitination and inhibition of the channel by NEDD4 and NEDD4L motif.

It belongs to the amiloride-sensitive sodium channel (TC 1.A.6) family. SCNN1G subfamily. As to quaternary structure, component of the heterotrimeric epithelial sodium channel (ENaC) composed of an alpha/SCNN1A, a beta/SCNN1B and a gamma/SCNN1G subunit. Interacts with WWP1 (via WW domains). Interacts with WWP2 (via WW domains); inhibits the channel. Interacts with the full-length immature form of PCSK9 (pro-PCSK9); inhibits ENaC by promoting its proteasomal degradation. Interacts with BPIFA1; the interaction is indirect via SCNN1B and inhibits the proteolytic maturation of SCNN1A and SCNN1G and the activation of ENaC. In terms of processing, phosphorylated on serine and threonine residues. Aldosterone and insulin increase the basal level of phosphorylation. Post-translationally, ubiquitinated. Can be ubiquitinated at multiple sites and undergo monoubiquitination and polyubiquitination. Ubiquitination by NEDD4 or NEDD4L inhibits the ENaC channel through endocytosis, intracellular retention and degradation of its individual subunits. ENaC is activated through the proteolytic maturation of its subunits. Furin cleaves the SCNN1G subunit first, followed by cleavage by prostasin (PRSS8), which results in a stepwise increase in the open probability of the channel due to the release of an inhibitory tract. BPIFA1, which is recruited by the SCNN1B subunit, prevents the proteolytic activation of ENaC. In terms of processing, N-glycosylated. N-linked glycans are processed to complex type during ENaC complex assembly and transport to the plasma membrane.

It localises to the apical cell membrane. The enzyme catalyses Na(+)(in) = Na(+)(out). With respect to regulation, originally identified and characterized by its inhibition by the diuretic drug amiloride. Its function is as follows. This is one of the three pore-forming subunits of the heterotrimeric epithelial sodium channel (ENaC), a critical regulator of sodium balance and fluid homeostasis. ENaC operates in epithelial tissues, where it mediates the electrodiffusion of sodium ions from extracellular fluid through the apical membrane of cells, with water following osmotically. It plays a key role in maintaining sodium homeostasis through electrogenic sodium reabsorption in the kidneys. Additionally, ENaC is essential for airway surface liquid homeostasis, which is crucial for proper mucus clearance. The sequence is that of Epithelial sodium channel subunit gamma from Rattus norvegicus (Rat).